Here is a 294-residue protein sequence, read N- to C-terminus: Nucleotide-binding protein Adeh_0147 (294 aa).

Residue 17–24 participates in ATP binding; it reads GVSGSGKS. 68–71 is a binding site for GTP; the sequence is DARE.

This sequence belongs to the RapZ-like family.

In terms of biological role, displays ATPase and GTPase activities. In Anaeromyxobacter dehalogenans (strain 2CP-C), this protein is Nucleotide-binding protein Adeh_0147.